The following is a 299-amino-acid chain: ATP phosphoribosyltransferase (299 aa).

The protein belongs to the ATP phosphoribosyltransferase family. Long subfamily. Equilibrium between an active dimeric form, an inactive hexameric form and higher aggregates. Interconversion between the various forms is largely reversible and is influenced by the natural substrates and inhibitors of the enzyme. The cofactor is Mg(2+).

It is found in the cytoplasm. The catalysed reaction is 1-(5-phospho-beta-D-ribosyl)-ATP + diphosphate = 5-phospho-alpha-D-ribose 1-diphosphate + ATP. Its pathway is amino-acid biosynthesis; L-histidine biosynthesis; L-histidine from 5-phospho-alpha-D-ribose 1-diphosphate: step 1/9. With respect to regulation, feedback inhibited by histidine. Catalyzes the condensation of ATP and 5-phosphoribose 1-diphosphate to form N'-(5'-phosphoribosyl)-ATP (PR-ATP). Has a crucial role in the pathway because the rate of histidine biosynthesis seems to be controlled primarily by regulation of HisG enzymatic activity. This is ATP phosphoribosyltransferase from Edwardsiella ictaluri (strain 93-146).